The following is a 509-amino-acid chain: MDPLCTASSGPRKKRPRQVGASMASPPHDIKFQNLVLFILEKKMGTTRRNFLMELARRKGFRVENELSDSVTHIVAENNSGSEVLEWLQVQNIRASSQLELLDVSWLIESMGAGKPVEITGKHQLVVRTDYSATPNPGFQKTPPLAVKKISQYACQRKTTLNNYNHIFTDAFEILAENSEFKENEVSYVTFMRAASVLKSLPFTIISMKDTEGIPCLGDKVKCIIEEIIEDGESSEVKAVLNDERYQSFKLFTSVFGVGLKTSEKWFRMGFRSLSKIMSDKTLKFTKMQKAGFLYYEDLVSCVTRAEAEAVGVLVKEAVWAFLPDAFVTMTGGFRRGKKIGHDVDFLITSPGSAEDEEQLLPKVINLWEKKGLLLYYDLVESTFEKFKLPSRQVDTLDHFQKCFLILKLHHQRVDSSKSNQQEGKTWKAIRVDLVMCPYENRAFALLGWTGSRQFERDIRRYATHERKMMLDNHALYDKTKRVFLKAESEEEIFAHLGLDYIEPWERNA.

The tract at residues 1–25 (MDPLCTASSGPRKKRPRQVGASMAS) is disordered. Residues 11 to 17 (PRKKRPR) carry the Nuclear localization signal motif. A BRCT domain is found at 27–124 (PHDIKFQNLV…KPVEITGKHQ (98 aa)). The mediates interaction with DNTTIP2 stretch occupies residues 151–509 (SQYACQRKTT…DYIEPWERNA (359 aa)). The involved in DNA binding stretch occupies residues 258–262 (VGLKT). A 2'-deoxyribonucleoside 5'-triphosphate-binding positions include 333–338 (GFRRGK) and 342–345 (HDVD). The Mg(2+) site is built by D343, D345, and D433. 448 to 449 (GW) lines the a 2'-deoxyribonucleoside 5'-triphosphate pocket.

This sequence belongs to the DNA polymerase type-X family. In terms of assembly, interacts with PRP19 and DNTTIP1. Forms a ternary complex with DNTTIP2 and core histone. Released from this complex by PCNA. Interacts with TRERF1. The cofactor is Mg(2+).

The protein localises to the nucleus. It catalyses the reaction DNA(n) + a 2'-deoxyribonucleoside 5'-triphosphate = DNA(n+1) + diphosphate. In terms of biological role, template-independent DNA polymerase which catalyzes the random addition of deoxynucleoside 5'-triphosphate to the 3'-end of a DNA initiator. One of the in vivo functions of this enzyme is the addition of nucleotides at the junction (N region) of rearranged Ig heavy chain and T-cell receptor gene segments during the maturation of B- and T-cells. This Bos taurus (Bovine) protein is DNA nucleotidylexotransferase (DNTT).